Here is a 516-residue protein sequence, read N- to C-terminus: Probable 2-isopropylmalate synthase (516 aa).

The 252-residue stretch at 20 to 271 (VTVFDTTLRD…KTNIRTEYLV (252 aa)) folds into the Pyruvate carboxyltransferase domain.

This sequence belongs to the alpha-IPM synthase/homocitrate synthase family.

It catalyses the reaction 3-methyl-2-oxobutanoate + acetyl-CoA + H2O = (2S)-2-isopropylmalate + CoA + H(+). It functions in the pathway amino-acid biosynthesis; L-leucine biosynthesis; L-leucine from 3-methyl-2-oxobutanoate: step 1/4. Functionally, catalyzes the condensation of the acetyl group of acetyl-CoA with 3-methyl-2-oxobutanoate (2-oxoisovalerate) to form 3-carboxy-3-hydroxy-4-methylpentanoate (2-isopropylmalate). The chain is Probable 2-isopropylmalate synthase (leuA) from Methanosarcina mazei (strain ATCC BAA-159 / DSM 3647 / Goe1 / Go1 / JCM 11833 / OCM 88) (Methanosarcina frisia).